Here is a 198-residue protein sequence, read N- to C-terminus: Ribosomal RNA small subunit methyltransferase G (198 aa).

S-adenosyl-L-methionine-binding positions include Gly74, Phe79, Ile123–Gln124, and Arg136.

It belongs to the methyltransferase superfamily. RNA methyltransferase RsmG family.

It is found in the cytoplasm. It carries out the reaction guanosine(527) in 16S rRNA + S-adenosyl-L-methionine = N(7)-methylguanosine(527) in 16S rRNA + S-adenosyl-L-homocysteine. Specifically methylates the N7 position of guanine in position 527 of 16S rRNA. This Orientia tsutsugamushi (strain Boryong) (Rickettsia tsutsugamushi) protein is Ribosomal RNA small subunit methyltransferase G.